The primary structure comprises 223 residues: Kinetochore protein Spc25 (223 aa).

Residues 65-115 (LRCGELEKRANFMEELTQELEATKQRNLVMRDQIKQLNVLARQHRNEVMES) are a coiled coil.

It belongs to the SPC25 family. As to quaternary structure, component of the Ndc80 complex, which is composed of Ndc80, Nuf2 and Spc25.

The protein resides in the nucleus. Its subcellular location is the chromosome. The protein localises to the centromere. It is found in the kinetochore. Acts as a component of the essential kinetochore-associated Ndc80 complex, which is required for chromosome segregation and spindle checkpoint activity during meiosis and mitosis. Required for kinetochore integrity and the organization of stable microtubule binding sites in the outer plate of the kinetochore. Participates in SAC signaling that responds specifically to disruptions in spindle microtubule dynamics. The NDC80 complex synergistically enhances the affinity of the SKA1 complex for microtubules and may allow the NDC80 complex to track depolymerizing microtubules. This chain is Kinetochore protein Spc25, found in Drosophila lutescens (Fruit fly).